Reading from the N-terminus, the 171-residue chain is Small ribosomal subunit protein uS5 (171 aa).

The 64-residue stretch at 13–76 folds into the S5 DRBM domain; the sequence is FLERLVAVNR…DQAKKNLVTI (64 aa).

Belongs to the universal ribosomal protein uS5 family. In terms of assembly, part of the 30S ribosomal subunit. Contacts proteins S4 and S8.

Functionally, with S4 and S12 plays an important role in translational accuracy. In terms of biological role, located at the back of the 30S subunit body where it stabilizes the conformation of the head with respect to the body. The protein is Small ribosomal subunit protein uS5 of Dichelobacter nodosus (strain VCS1703A).